Reading from the N-terminus, the 236-residue chain is Phosphoribosylaminoimidazole-succinocarboxamide synthase (236 aa).

Belongs to the SAICAR synthetase family.

It catalyses the reaction 5-amino-1-(5-phospho-D-ribosyl)imidazole-4-carboxylate + L-aspartate + ATP = (2S)-2-[5-amino-1-(5-phospho-beta-D-ribosyl)imidazole-4-carboxamido]succinate + ADP + phosphate + 2 H(+). Its pathway is purine metabolism; IMP biosynthesis via de novo pathway; 5-amino-1-(5-phospho-D-ribosyl)imidazole-4-carboxamide from 5-amino-1-(5-phospho-D-ribosyl)imidazole-4-carboxylate: step 1/2. This chain is Phosphoribosylaminoimidazole-succinocarboxamide synthase, found in Campylobacter concisus (strain 13826).